Consider the following 265-residue polypeptide: Putative hydro-lyase PA14_37210 (265 aa).

It belongs to the D-glutamate cyclase family.

This chain is Putative hydro-lyase PA14_37210, found in Pseudomonas aeruginosa (strain UCBPP-PA14).